Here is a 455-residue protein sequence, read N- to C-terminus: T-box protein VegT (455 aa).

The T-box DNA-binding region spans 57–230 (LWAQFHQEGT…HNPFAKGFRE (174 aa)). Residues 229 to 241 (REQERSHKRDDVL) show a composition bias toward basic and acidic residues. 2 disordered regions span residues 229-276 (REQE…RVKE) and 295-360 (ANQG…PDSD). Residues 308–326 (GANQEQQVPSSSSNFYNRN) show a composition bias toward polar residues.

Forms a repression complex on the promoters of the nodal/nr1 and siamois genes with the maternal factors tcf7l1/tcf3 and pouf5.1/oct-25. Interacts (via C-terminus) with tcf7l1/tcf3 (via N-terminus). Also interacts with the other POU-domain transcription factors pou5f1.2/oct-91 and pou5f1.3/oct-60. In terms of tissue distribution, vegetally localized in oocytes and expressed in the presumptive endoderm and mesoderm at early gastrula stage. Expression is down-regulated in the endoderm by the end of gastrulation but maintained in the lateral and ventral mesoderm of the blastopore lip.

It localises to the nucleus. Functionally, transcription factor required for both mesoderm and endoderm formation in the embryo; signaling determinants and concentration levels may determine which germ layer is formed. Acts together with beta-catenin to activate genes that are responsible for mesoderm induction including wnt-8, eomes t/bra, siamois, mix1 and sox17. Directly binds to promoter DNA. Patterns the mesoderm along the dorsoventral and posterior axis. Activates siamois gene transcription when alone or in combination with beta-catenin, but inhibits siamois transcription in combination with pou5f1.1/oct-25. The polypeptide is T-box protein VegT (Xenopus tropicalis (Western clawed frog)).